Here is a 313-residue protein sequence, read N- to C-terminus: Pyrimidine-specific ribonucleoside hydrolase RihB (313 aa).

The active-site Proton acceptor is aspartate 11. Residues aspartate 11, aspartate 16, and valine 124 each contribute to the Ca(2+) site. Residues glutamine 227 and histidine 239 each contribute to the substrate site. Residue aspartate 240 coordinates Ca(2+).

Belongs to the IUNH family. RihB subfamily. Homotetramer. Ca(2+) serves as cofactor.

The catalysed reaction is a pyrimidine ribonucleoside + H2O = a pyrimidine nucleobase + D-ribose. Functionally, hydrolyzes cytidine or uridine to ribose and cytosine or uracil, respectively. Has a clear preference for cytidine over uridine. Strictly specific for ribonucleosides. The sequence is that of Pyrimidine-specific ribonucleoside hydrolase RihB from Escherichia coli O157:H7.